The primary structure comprises 379 residues: Botryococcene C-methyltransferase (379 aa).

Residues 17–37 traverse the membrane as a helical segment; it reads LLTWKGAAGLAAAVALGYIII.

It belongs to the class I-like SAM-binding methyltransferase superfamily. Erg6/SMT family.

The protein resides in the microsome membrane. The enzyme catalyses C30 botryococcene + 2 S-adenosyl-L-methionine = 3,20-dimethyl-1,2,21,22-tetradehydro-2,3,20,21-tetrahydrobotryococcene + 2 S-adenosyl-L-homocysteine + 2 H(+). In terms of biological role, converts botryococcene to mono- and dimethyl derivatives, but not to tri- and tetramethylated products. Unable to methylate cycloartenol, zymosterol or lanosterol, but can also use squalene as substrate. Methylates both C-3 and C22 positions, but only C-3 position in monomethylated squalenes. In contrast, monomethylated botryococcene occured mainly at the C-20 position yielding showacene, but also at the C-3 position yielding isoshowacene. This chain is Botryococcene C-methyltransferase (TMT-3), found in Botryococcus braunii (Green alga).